The sequence spans 309 residues: tRNA-cytidine(32) 2-sulfurtransferase (309 aa).

A PP-loop motif motif is present at residues 47-52 (SGGKDS). [4Fe-4S] cluster-binding residues include cysteine 122, cysteine 125, and cysteine 213.

Belongs to the TtcA family. As to quaternary structure, homodimer. Requires Mg(2+) as cofactor. [4Fe-4S] cluster is required as a cofactor.

The protein localises to the cytoplasm. It carries out the reaction cytidine(32) in tRNA + S-sulfanyl-L-cysteinyl-[cysteine desulfurase] + AH2 + ATP = 2-thiocytidine(32) in tRNA + L-cysteinyl-[cysteine desulfurase] + A + AMP + diphosphate + H(+). It participates in tRNA modification. Functionally, catalyzes the ATP-dependent 2-thiolation of cytidine in position 32 of tRNA, to form 2-thiocytidine (s(2)C32). The sulfur atoms are provided by the cysteine/cysteine desulfurase (IscS) system. In Erwinia tasmaniensis (strain DSM 17950 / CFBP 7177 / CIP 109463 / NCPPB 4357 / Et1/99), this protein is tRNA-cytidine(32) 2-sulfurtransferase.